The primary structure comprises 237 residues: tRNA1(Val) (adenine(37)-N6)-methyltransferase (237 aa).

Belongs to the methyltransferase superfamily. tRNA (adenine-N(6)-)-methyltransferase family.

The protein localises to the cytoplasm. It carries out the reaction adenosine(37) in tRNA1(Val) + S-adenosyl-L-methionine = N(6)-methyladenosine(37) in tRNA1(Val) + S-adenosyl-L-homocysteine + H(+). Its function is as follows. Specifically methylates the adenine in position 37 of tRNA(1)(Val) (anticodon cmo5UAC). The polypeptide is tRNA1(Val) (adenine(37)-N6)-methyltransferase (Bacteroides fragilis (strain YCH46)).